The chain runs to 143 residues: Transcription antitermination protein NusB (143 aa).

This sequence belongs to the NusB family.

Functionally, involved in transcription antitermination. Required for transcription of ribosomal RNA (rRNA) genes. Binds specifically to the boxA antiterminator sequence of the ribosomal RNA (rrn) operons. This Desulforapulum autotrophicum (strain ATCC 43914 / DSM 3382 / VKM B-1955 / HRM2) (Desulfobacterium autotrophicum) protein is Transcription antitermination protein NusB.